The primary structure comprises 154 residues: Large ribosomal subunit protein uL13 (154 aa).

This sequence belongs to the universal ribosomal protein uL13 family. In terms of assembly, part of the 50S ribosomal subunit.

This protein is one of the early assembly proteins of the 50S ribosomal subunit, although it is not seen to bind rRNA by itself. It is important during the early stages of 50S assembly. In Mesorhizobium japonicum (strain LMG 29417 / CECT 9101 / MAFF 303099) (Mesorhizobium loti (strain MAFF 303099)), this protein is Large ribosomal subunit protein uL13.